A 321-amino-acid polypeptide reads, in one-letter code: Ribosomal RNA small subunit methyltransferase H (321 aa).

S-adenosyl-L-methionine-binding positions include 43–45, D63, F89, D110, and Q117; that span reads GGH. The interval 286–321 is disordered; that stretch reads HPAGKALRAGPRETRDNPRSRSAVLRVAERSERHAA. 2 stretches are compositionally biased toward basic and acidic residues: residues 295 to 304 and 312 to 321; these read GPRETRDNPR and VAERSERHAA.

It belongs to the methyltransferase superfamily. RsmH family.

Its subcellular location is the cytoplasm. It catalyses the reaction cytidine(1402) in 16S rRNA + S-adenosyl-L-methionine = N(4)-methylcytidine(1402) in 16S rRNA + S-adenosyl-L-homocysteine + H(+). Specifically methylates the N4 position of cytidine in position 1402 (C1402) of 16S rRNA. This is Ribosomal RNA small subunit methyltransferase H from Acidithiobacillus ferrooxidans (strain ATCC 23270 / DSM 14882 / CIP 104768 / NCIMB 8455) (Ferrobacillus ferrooxidans (strain ATCC 23270)).